Consider the following 343-residue polypeptide: Thromboxane A2 receptor (343 aa).

Topologically, residues 1-29 (MWPNGSSLGPCFRPTNITLEERRLIASPW) are extracellular. N-linked (GlcNAc...) asparagine glycosylation is found at N4 and N16. Residues 30–52 (FAASFCVVGLASNLLALSVLAGA) form a helical membrane-spanning segment. Over 53 to 66 (RQGGSHTRSSFLTF) the chain is Cytoplasmic. The chain crosses the membrane as a helical span at residues 67–87 (LCGLVLTDFLGLLVTGTIVVS). Topologically, residues 88–106 (QHAALFEWHAVDPGCRLCR) are extracellular. Cysteines 105 and 183 form a disulfide. Residues 107–128 (FMGVVMIFFGLSPLLLGAAMAS) traverse the membrane as a helical segment. Topologically, residues 129–149 (ERYLGITRPFSRPAVASQRRA) are cytoplasmic. The helical transmembrane segment at 150–172 (WATVGLVWAAALALGLLPLLGVG) threads the bilayer. The Extracellular segment spans residues 173–193 (RYTVQYPGSWCFLTLGAESGD). Residues 194–219 (VAFGLLFSMLGGLSVGLSFLLNTVSV) traverse the membrane as a helical segment. Residues 220 to 246 (ATLCHVYHGQEAAQQRPRDSEVEMMAQ) are Cytoplasmic-facing. A helical membrane pass occupies residues 247-270 (LLGIMVVASVCWLPLLVFIAQTVL). Topologically, residues 271 to 289 (RNPPAMSPAGQLSRTTEKE) are extracellular. Residues 290 to 311 (LLIYLRVATWNQILDPWVYILF) traverse the membrane as a helical segment. Over 312–343 (RRAVLRRLQPRLSTRPRSLSLQPQLTQRSGLQ) the chain is Cytoplasmic. S329 and S331 each carry phosphoserine.

The protein belongs to the G-protein coupled receptor 1 family. In terms of assembly, interacts with RPGRIP1L. Interacts with PSMA3. Interacts with RACK1; the interaction regulates TBXA2R cell surface expression.

The protein localises to the cell membrane. Receptor for thromboxane A2 (TXA2), a potent stimulator of platelet aggregation. The activity of this receptor is mediated by a G-protein that activates a phosphatidylinositol-calcium second messenger system. In the kidney, the binding of TXA2 to glomerular TP receptors causes intense vasoconstriction. Activates phospholipase C. Functionally, activates adenylyl cyclase. Its function is as follows. Inhibits adenylyl cyclase. The protein is Thromboxane A2 receptor (TBXA2R) of Homo sapiens (Human).